The chain runs to 919 residues: Chaperone protein ClpC2, chloroplastic (919 aa).

A chloroplast-targeting transit peptide spans 1-54; that stretch reads MAGTLLQPVALGTTFAGRVSGQRWKSHGTRRPPSMLAMSLSRPVKMAAFVGLRS. In terms of domain architecture, Clp R spans 89 to 231; that stretch reads FERFTEKAIK…RTQVIRMIGE (143 aa). 2 repeat regions span residues 92 to 157 and 167 to 231; these read FTEK…IGRG and FTPR…MIGE. The tract at residues 252–499 is i; the sequence is LEEYGTNLTK…RVRLRHAQVP (248 aa). 297 to 304 contacts ATP; the sequence is GEPGVGKT. The region spanning 506–541 is the UVR domain; that stretch reads DKELKQITKDKNEAVRSQDFEKAGELRDREMELKAQ. Positions 566–757 are II; sequence VNEADIQHIV…LLIMTSNVGS (192 aa). Residue 640–647 coordinates ATP; that stretch reads GPTGVGKS.

The protein belongs to the ClpA/ClpB family. ClpC subfamily.

It localises to the plastid. It is found in the chloroplast. Functionally, molecular chaperone that may interact with a ClpP-like protease involved in degradation of denatured proteins in the chloroplast. The chain is Chaperone protein ClpC2, chloroplastic (CLPC2) from Oryza sativa subsp. japonica (Rice).